We begin with the raw amino-acid sequence, 111 residues long: UPF0060 membrane protein Cbei_2176 (111 aa).

Transmembrane regions (helical) follow at residues 7–27 (ILYF…IWIW), 33–53 (SYLY…IPTL), 60–80 (FGKV…LWGW), and 85–105 (IVPD…VIVI).

It belongs to the UPF0060 family.

It localises to the cell membrane. This Clostridium beijerinckii (strain ATCC 51743 / NCIMB 8052) (Clostridium acetobutylicum) protein is UPF0060 membrane protein Cbei_2176.